An 81-amino-acid polypeptide reads, in one-letter code: Cytotoxin 1a (81 aa).

Positions 1–21 (MKTLLLTLVVVTIVCLDLGYT) are cleaved as a signal peptide. 4 disulfides stabilise this stretch: Cys-24–Cys-42, Cys-35–Cys-59, Cys-63–Cys-74, and Cys-75–Cys-80.

It belongs to the three-finger toxin family. Short-chain subfamily. Type IA cytotoxin sub-subfamily. As to quaternary structure, monomer in solution; Homodimer and oligomer in the presence of negatively charged lipids forming a pore with a size ranging between 20 and 30 Angstroms. Expressed by the venom gland.

It is found in the secreted. The protein resides in the target cell membrane. Shows cytolytic activity on many different cells by forming pore in lipid membranes. In vivo, increases heart rate or kills the animal by cardiac arrest. In addition, it binds to heparin with high affinity, interacts with Kv channel-interacting protein 1 (KCNIP1) in a calcium-independent manner, and binds to integrin alpha-V/beta-3 (ITGAV/ITGB3) with moderate affinity. This is Cytotoxin 1a from Naja atra (Chinese cobra).